A 553-amino-acid polypeptide reads, in one-letter code: COP9 signalosome complex subunit 10 (553 aa).

Residues 21–46 (AEMEEDSDEMGVYEEETSQGAEEEVP) show a composition bias toward acidic residues. The tract at residues 21 to 47 (AEMEEDSDEMGVYEEETSQGAEEEVPL) is disordered. In terms of domain architecture, PCI spans 298 to 474 (LRTHFSACLQ…DYVYFGDEPR (177 aa)).

As to quaternary structure, component of a COP9 signalosome-like (CSN) complex.

Its subcellular location is the cytoplasm. It localises to the nucleus. Functionally, component of the COP9 signalosome (CSN) complex that acts as an regulator of the ubiquitin (Ubl) conjugation pathway by mediating the deneddylation of the cullin subunit of SCF-type E3 ubiquitin-protein ligase complexes. The CSN complex is involved in the regulation of the mating pheromone response. This chain is COP9 signalosome complex subunit 10 (RRI2), found in Eremothecium gossypii (strain ATCC 10895 / CBS 109.51 / FGSC 9923 / NRRL Y-1056) (Yeast).